Here is a 336-residue protein sequence, read N- to C-terminus: Holliday junction branch migration complex subunit RuvB (336 aa).

The segment at Met-4 to Tyr-185 is large ATPase domain (RuvB-L). Residues Leu-24, Arg-25, Gly-66, Lys-69, Thr-70, Thr-71, Glu-132–Phe-134, Arg-175, Tyr-185, and Arg-222 contribute to the ATP site. Residue Thr-70 participates in Mg(2+) binding. Positions Thr-186–Gln-256 are small ATPAse domain (RuvB-S). The segment at Lys-259–Val-336 is head domain (RuvB-H). Arg-314 and Arg-319 together coordinate DNA.

This sequence belongs to the RuvB family. Homohexamer. Forms an RuvA(8)-RuvB(12)-Holliday junction (HJ) complex. HJ DNA is sandwiched between 2 RuvA tetramers; dsDNA enters through RuvA and exits via RuvB. An RuvB hexamer assembles on each DNA strand where it exits the tetramer. Each RuvB hexamer is contacted by two RuvA subunits (via domain III) on 2 adjacent RuvB subunits; this complex drives branch migration. In the full resolvosome a probable DNA-RuvA(4)-RuvB(12)-RuvC(2) complex forms which resolves the HJ.

Its subcellular location is the cytoplasm. The catalysed reaction is ATP + H2O = ADP + phosphate + H(+). Its function is as follows. The RuvA-RuvB-RuvC complex processes Holliday junction (HJ) DNA during genetic recombination and DNA repair, while the RuvA-RuvB complex plays an important role in the rescue of blocked DNA replication forks via replication fork reversal (RFR). RuvA specifically binds to HJ cruciform DNA, conferring on it an open structure. The RuvB hexamer acts as an ATP-dependent pump, pulling dsDNA into and through the RuvAB complex. RuvB forms 2 homohexamers on either side of HJ DNA bound by 1 or 2 RuvA tetramers; 4 subunits per hexamer contact DNA at a time. Coordinated motions by a converter formed by DNA-disengaged RuvB subunits stimulates ATP hydrolysis and nucleotide exchange. Immobilization of the converter enables RuvB to convert the ATP-contained energy into a lever motion, pulling 2 nucleotides of DNA out of the RuvA tetramer per ATP hydrolyzed, thus driving DNA branch migration. The RuvB motors rotate together with the DNA substrate, which together with the progressing nucleotide cycle form the mechanistic basis for DNA recombination by continuous HJ branch migration. Branch migration allows RuvC to scan DNA until it finds its consensus sequence, where it cleaves and resolves cruciform DNA. The sequence is that of Holliday junction branch migration complex subunit RuvB from Bacillus cereus (strain ZK / E33L).